The primary structure comprises 346 residues: Magnesium-protoporphyrin IX monomethyl ester [oxidative] cyclase (346 aa).

The protein belongs to the AcsF family. The cofactor is Fe cation.

The enzyme catalyses Mg-protoporphyrin IX 13-monomethyl ester + 3 NADPH + 3 O2 + 2 H(+) = 3,8-divinyl protochlorophyllide a + 3 NADP(+) + 5 H2O. It functions in the pathway porphyrin-containing compound metabolism; chlorophyll biosynthesis (light-independent). Catalyzes the formation of the isocyclic ring in chlorophyll biosynthesis. Mediates the cyclase reaction, which results in the formation of divinylprotochlorophyllide (Pchlide) characteristic of all chlorophylls from magnesium-protoporphyrin IX 13-monomethyl ester (MgPMME). The protein is Magnesium-protoporphyrin IX monomethyl ester [oxidative] cyclase of Gloeobacter violaceus (strain ATCC 29082 / PCC 7421).